The primary structure comprises 291 residues: N-acetylmannosamine kinase (291 aa).

ATP contacts are provided by residues 5–12 (AIDIGGTK) and 132–139 (GVGGGVVS). Residues His-156, Cys-166, Cys-168, and Cys-173 each coordinate Zn(2+).

This sequence belongs to the ROK (NagC/XylR) family. NanK subfamily. In terms of assembly, homodimer.

The catalysed reaction is an N-acyl-D-mannosamine + ATP = an N-acyl-D-mannosamine 6-phosphate + ADP + H(+). It functions in the pathway amino-sugar metabolism; N-acetylneuraminate degradation; D-fructose 6-phosphate from N-acetylneuraminate: step 2/5. Functionally, catalyzes the phosphorylation of N-acetylmannosamine (ManNAc) to ManNAc-6-P. This chain is N-acetylmannosamine kinase, found in Escherichia coli (strain K12 / MC4100 / BW2952).